We begin with the raw amino-acid sequence, 1966 residues long: Alpha-protein kinase 2 (1966 aa).

Disordered regions lie at residues 23–65 (NSSP…STGL), 211–231 (AMNSEQSPDQPFSIASNDTDK), 1211–1259 (LKSN…AYSD), 1303–1365 (SLPN…EGAG), 1386–1423 (KTQGKKKKKHVQHGTPKPENDAPTDVRSESRQKNVNGK), and 1437–1463 (NKPVAQPSGKTDITKKDSAQKVMSVRP). The span at 211–227 (AMNSEQSPDQPFSIASN) shows a compositional bias: polar residues. Over residues 1211-1221 (LKSNKKSSSSD) the composition is skewed to low complexity. The span at 1325-1342 (SDGKMRSKHKEKPDDKQQ) shows a compositional bias: basic and acidic residues. Residues 1388–1397 (QGKKKKKHVQ) show a composition bias toward basic residues. Positions 1401–1417 (PKPENDAPTDVRSESRQ) are enriched in basic and acidic residues. The region spanning 1577-1659 (PRVVSEIQAD…SLIVANISVS (83 aa)) is the Ig-like domain. Cys-1599 and Cys-1649 form a disulfide bridge. Residues 1702-1934 (KEDFLSDQYF…YCELLGLVSL (233 aa)) form the Alpha-type protein kinase domain. Positions 1937–1966 (KPKRTVAPPKPKTQPVPKKKTFGPVLNAKS) are disordered.

This sequence belongs to the protein kinase superfamily. Alpha-type protein kinase family. ALPK subfamily. In terms of tissue distribution, expressed in developing cardiac tissue.

The protein localises to the basolateral cell membrane. It catalyses the reaction L-seryl-[protein] + ATP = O-phospho-L-seryl-[protein] + ADP + H(+). The enzyme catalyses L-threonyl-[protein] + ATP = O-phospho-L-threonyl-[protein] + ADP + H(+). Protein kinase that recognizes phosphorylation sites in which the surrounding peptides have an alpha-helical conformation. Regulates cardiac development and cardiomyocyte differentiation by negatively regulating Wnt/beta-catenin signaling. The chain is Alpha-protein kinase 2 (alpk2) from Danio rerio (Zebrafish).